We begin with the raw amino-acid sequence, 671 residues long: Acetyl-coenzyme A synthetase 1 (671 aa).

CoA contacts are provided by residues 210–213 and T329; that span reads RGGK. ATP is bound by residues 405–407, 429–434, D520, and R535; these read GEP and DTYWQT. S543 contributes to the CoA binding site. An ATP-binding site is contributed by R546. A CoA-binding site is contributed by R605.

The protein belongs to the ATP-dependent AMP-binding enzyme family.

It catalyses the reaction acetate + ATP + CoA = acetyl-CoA + AMP + diphosphate. The chain is Acetyl-coenzyme A synthetase 1 (ACS1) from Debaryomyces hansenii (strain ATCC 36239 / CBS 767 / BCRC 21394 / JCM 1990 / NBRC 0083 / IGC 2968) (Yeast).